The primary structure comprises 158 residues: RING-H2 finger protein ATL66 (158 aa).

Residues 33–53 (LFFALALFSVVLFFALLTLYI) traverse the membrane as a helical segment. The RING-type; atypical zinc finger occupies 107 to 149 (CCICLGGFEEGEKMKVLPPCSHCYHCECVDRWLKTESSCPLCR).

This sequence belongs to the RING-type zinc finger family. ATL subfamily.

It is found in the membrane. The catalysed reaction is S-ubiquitinyl-[E2 ubiquitin-conjugating enzyme]-L-cysteine + [acceptor protein]-L-lysine = [E2 ubiquitin-conjugating enzyme]-L-cysteine + N(6)-ubiquitinyl-[acceptor protein]-L-lysine.. It functions in the pathway protein modification; protein ubiquitination. This is RING-H2 finger protein ATL66 (ATL66) from Arabidopsis thaliana (Mouse-ear cress).